The sequence spans 104 residues: Pyrimidine/purine nucleoside phosphorylase (104 aa).

The protein belongs to the nucleoside phosphorylase PpnP family.

The enzyme catalyses a purine D-ribonucleoside + phosphate = a purine nucleobase + alpha-D-ribose 1-phosphate. It carries out the reaction adenosine + phosphate = alpha-D-ribose 1-phosphate + adenine. The catalysed reaction is cytidine + phosphate = cytosine + alpha-D-ribose 1-phosphate. It catalyses the reaction guanosine + phosphate = alpha-D-ribose 1-phosphate + guanine. The enzyme catalyses inosine + phosphate = alpha-D-ribose 1-phosphate + hypoxanthine. It carries out the reaction thymidine + phosphate = 2-deoxy-alpha-D-ribose 1-phosphate + thymine. The catalysed reaction is uridine + phosphate = alpha-D-ribose 1-phosphate + uracil. It catalyses the reaction xanthosine + phosphate = alpha-D-ribose 1-phosphate + xanthine. In terms of biological role, catalyzes the phosphorolysis of diverse nucleosides, yielding D-ribose 1-phosphate and the respective free bases. Can use uridine, adenosine, guanosine, cytidine, thymidine, inosine and xanthosine as substrates. Also catalyzes the reverse reactions. The sequence is that of Pyrimidine/purine nucleoside phosphorylase from Thiobacillus denitrificans (strain ATCC 25259 / T1).